Here is a 332-residue protein sequence, read N- to C-terminus: DnAJ-like protein slr0093 (332 aa).

The J domain maps to 6–75 (FKDYYQILGV…RQKYDQFGRY (70 aa)).

This chain is DnAJ-like protein slr0093, found in Synechocystis sp. (strain ATCC 27184 / PCC 6803 / Kazusa).